We begin with the raw amino-acid sequence, 255 residues long: Methanethiol S-methyltransferase (255 aa).

5 consecutive transmembrane segments (helical) span residues 16–36 (FVLL…VYAV), 56–76 (LVTA…QHSV), 99–119 (YVLF…PIGI), 131–151 (IIFY…TFLI), and 191–211 (VGWF…LVFA).

The protein belongs to the nurim family.

Its subcellular location is the membrane. It carries out the reaction methanethiol + S-adenosyl-L-methionine = dimethyl sulfide + S-adenosyl-L-homocysteine + H(+). Functionally, catalyzes the methylation of methanethiol (MeSH) to yield dimethylsulphide (DMS). In Crocosphaera subtropica (strain ATCC 51142 / BH68) (Cyanothece sp. (strain ATCC 51142)), this protein is Methanethiol S-methyltransferase.